Here is a 38-residue protein sequence, read N- to C-terminus: Toxin Bcg III 31.16 (38 aa).

3 disulfides stabilise this stretch: Cys-4-Cys-37, Cys-6-Cys-30, and Cys-20-Cys-38.

This sequence belongs to the sea anemone type 3 (BDS) potassium channel toxin family.

It is found in the secreted. It localises to the nematocyst. Possible modulator of crustacean voltage-gated sodium channels (Nav). This chain is Toxin Bcg III 31.16, found in Bunodosoma cangicum (Sea anemone).